A 248-amino-acid chain; its full sequence is Deoxyribose-phosphate aldolase (248 aa).

Residue Asp-106 is the Proton donor/acceptor of the active site. The active-site Schiff-base intermediate with acetaldehyde is the Lys-168. Lys-197 functions as the Proton donor/acceptor in the catalytic mechanism.

It belongs to the DeoC/FbaB aldolase family. DeoC type 1 subfamily.

The protein resides in the cytoplasm. The catalysed reaction is 2-deoxy-D-ribose 5-phosphate = D-glyceraldehyde 3-phosphate + acetaldehyde. It functions in the pathway carbohydrate degradation; 2-deoxy-D-ribose 1-phosphate degradation; D-glyceraldehyde 3-phosphate and acetaldehyde from 2-deoxy-alpha-D-ribose 1-phosphate: step 2/2. Catalyzes a reversible aldol reaction between acetaldehyde and D-glyceraldehyde 3-phosphate to generate 2-deoxy-D-ribose 5-phosphate. The sequence is that of Deoxyribose-phosphate aldolase from Rhizobium meliloti (strain 1021) (Ensifer meliloti).